A 152-amino-acid chain; its full sequence is Large ribosomal subunit protein uL30 (152 aa).

This sequence belongs to the universal ribosomal protein uL30 family. Part of the 50S ribosomal subunit.

The protein is Large ribosomal subunit protein uL30 of Methanobrevibacter smithii (strain ATCC 35061 / DSM 861 / OCM 144 / PS).